The sequence spans 1439 residues: MEEALEMARAKDTKERMAAVERLHQLLEASRKSLSPAEVTSLVDSCLDLLKDSNFRVSQGALQALASAAVLAGEHLKLHLNALVPAVVERLGDSKQPVRDAARRLLTTLMEVSSPTIIVERAGSYAWMHKSWRVREEFARTVTSAIGLFASTELPLQRVILAPILQMLNDPNQAVREAAILCIEEMYMQGGSQFREELQRHHLPSYMVKDINARLERIEPQLRSTDGRSAHHVVNEVKASSVNPKKSSPRAKAPTRENSLFGGDADITEKPIEPIKVYSEKELIREFEKIAATLVPEKDWSMRISAMRRVEGLVAGGATDYSCFRGLLKQLVGPLSTQLADRRSTIVKQACHLLCLLSKELLGDFEACAETFIPVLFKLVVITVLVIAESADNCIKTMLRNCKAARVLPRIAESAKHDRNAILRARCCEYALLTLEHWPDAPEIQRSVDLYEDLIRCCVADAMSEVRATARMCYRMFAKTWPDRSRRLFSSFDPVIQRLINEEDGGIHRRHASPSVRERHSQPSFSQTSAPSNLPGYGTSAIVAMDRSSNLSSGGSLSSGLLLSQSKDVNKGSERSLESVLQSSKQKVSAIESMLRGLHISDRQNPAALRSSSLDLGVDPPSSRDPPFHAVAPASNSHTSSAAAESTHSINKGSNRNGGLGLSDIITQIQASKDSGRSSYRGNLLSESHPTFSSLTAKRGSERNERSSLEESNDAREVRRFMAGHFDRQQMDTAYRDLTFRESNASHVPNFQRPLLRKNVGGRMSAGRRRSFDDSQLQIGDISNFVDGPASLNEALNDGLNSSSDWCARVAAFNFLQTLLQQGPKGAQEVIQSFEKVMKLFLRHLDDPHHKVAQAALSTLADLIPSCRKPFESYMERVLPHVFSRLIDPKEVVRQPCSSTLEIVSKTYSVDSLLPALLRSLDEQRSPKAKLAVIEFAINSFNRYAGNPEISGNSGILKLWLAKLTPLTRDKNTKLKEASITCIISVYNHYDSAGLLNYILSLSVEEQNSLRRALKQYTPRIEVDLLNYMQSKKEKQRIKSYDPSDAIGTSSEEGYAGASKKNIFLGRYSGGSIDSDSGRKWSSSQEPTMITGGVGQNVSSGTQEKLYQNVRTGISSASDLLNPKDSDYTFASAGQNSISRTSPNGSSENIEILDDLSPPHLEKNGLNLTSVDSLEGRHENEVSRELDLGHYMLTSIKVNTTPESGPSIPQILHMINGSDGSPSSSKKSGLQQLIEASVANEESVWTKYFNQILTVVLEVLDDEDFSIKELALSLISEMLKSQKDAMEDSVEIVIEKLLHVSKDTVPKVSTEAEQCLTTVLSQYDPFRCLSVIVPLLVTEDEKTLVACINCLTKLVGRLSQEELMDQLSSFLPAVFEAFGSQSADVRKTVVFCLVDIYIMLGKAFLPYLEGLNSTQVRLVTIYANRISQARNGAPIDADT.

N-acetylmethionine is present on M1. HEAT repeat units follow at residues 1–32 (MEEALEMARAKDTKERMAAVERLHQLLEASRK), 36–74 (PAEVTSLVDSCLDLLKDSNFRVSQGALQALASAAVLAGE), 77–115 (KLHLNALVPAVVERLGDSKQPVRDAARRLLTTLMEVSSP), and 154–192 (LPLQRVILAPILQMLNDPNQAVREAAILCIEEMYMQGGS). Residues 238 to 264 (KASSVNPKKSSPRAKAPTRENSLFGGD) are disordered. HEAT repeat units follow at residues 281-319 (KELIREFEKIAATLVPEKDWSMRISAMRRVEGLVAGGAT), 325-363 (RGLLKQLVGPLSTQLADRRSTIVKQACHLLCLLSKELLG), 366-401 (EACAETFIPVLFKLVVITVLVIAESADNCIKTMLRN), 402-439 (CKAARVLPRIAESAKHDRNAILRARCCEYALLTLEHWP), and 486-525 (RRLFSSFDPVIQRLINEEDGGIHRRHASPSVRERHSQPSF). Disordered stretches follow at residues 503–539 (EDGGIHRRHASPSVRERHSQPSFSQTSAPSNLPGYGT), 611–660 (SSSL…NGGL), and 672–715 (SKDS…SNDA). Polar residues predominate over residues 522–532 (QPSFSQTSAPS). A compositionally biased stretch (low complexity) spans 632–649 (APASNSHTSSAAAESTHS). The span at 672-696 (SKDSGRSSYRGNLLSESHPTFSSLT) shows a compositional bias: polar residues. A compositionally biased stretch (basic and acidic residues) spans 699 to 715 (RGSERNERSSLEESNDA). HEAT repeat units follow at residues 809 to 830 (RVAAFNFLQTLLQQGPKGAQEV), 831 to 869 (IQSFEKVMKLFLRHLDDPHHKVAQAALSTLADLIPSCRK), 872 to 910 (ESYMERVLPHVFSRLIDPKEVVRQPCSSTLEIVSKTYSV), 912 to 950 (SLLPALLRSLDEQRSPKAKLAVIEFAINSFNRYAGNPEI), 954 to 992 (SGILKLWLAKLTPLTRDKNTKLKEASITCIISVYNHYDS), and 994 to 1031 (GLLNYILSLSVEEQNSLRRALKQYTPRIEVDLLNYMQS). The span at 1074–1088 (DSDSGRKWSSSQEPT) shows a compositional bias: polar residues. Residues 1074–1101 (DSDSGRKWSSSQEPTMITGGVGQNVSSG) form a disordered region. 6 HEAT repeats span residues 1201–1239 (TPESGPSIPQILHMINGSDGSPSSSKKSGLQQLIEASVA), 1246–1284 (TKYFNQILTVVLEVLDDEDFSIKELALSLISEMLKSQKD), 1287–1325 (EDSVEIVIEKLLHVSKDTVPKVSTEAEQCLTTVLSQYDP), 1327–1360 (RCLSVIVPLLVTEDEKTLVACINCLTKLVGRLSQ), 1364–1402 (MDQLSSFLPAVFEAFGSQSADVRKTVVFCLVDIYIMLGK), and 1405–1439 (LPYLEGLNSTQVRLVTIYANRISQARNGAPIDADT).

It belongs to the CLASP family. As to expression, expressed at a low level in all tissues, mostly in young developing tissues.

Its subcellular location is the cytoplasm. The protein resides in the cytoskeleton. The protein localises to the spindle. It localises to the phragmoplast. It is found in the cell cortex. Cortical microtubule plus-end tracking protein required for cell morphogenesis and cell division. Promotes the stabilization of dynamic microtubules during mitosis. Regulates microtubule-cortex attachment, thereby contributing to self-organization of cortical microtubules and subsequent cell shape. In Arabidopsis thaliana (Mouse-ear cress), this protein is CLIP-associated protein (CLASP).